The chain runs to 88 residues: Stannin (88 aa).

Residues 1–10 (MSIMDHSPTT) are Mitochondrial intermembrane-facing. A helical transmembrane segment spans residues 11-31 (GVVTVIVILIAIAALGALILG). The Cytoplasmic portion of the chain corresponds to 32–88 (CWCYLRLQRISQSEDEESIVGDGETKEPFLLVQYSAKGPCVERKAKLMTANSPEVHG). Residues serine 49 and serine 83 each carry the phosphoserine modification.

This sequence belongs to the stannin family. In terms of assembly, monomer.

Its subcellular location is the mitochondrion outer membrane. Its function is as follows. Plays a role in the toxic effects of organotins. Plays a role in endosomal maturation. This chain is Stannin (Snn), found in Mus musculus (Mouse).